Reading from the N-terminus, the 731-residue chain is Ubiquitin carboxyl-terminal hydrolase 17 (731 aa).

Cys-57, Cys-60, Cys-68, Cys-71, Cys-77, Cys-81, His-90, and Cys-94 together coordinate Zn(2+). The MYND-type zinc-finger motif lies at 57–94; the sequence is CAVCLYPTTTRCSQCKSVRYCSSKCQILHWRRGHKEEC. Disordered regions lie at residues 171 to 219 and 262 to 281; these read YETR…DSAN and LPSKANSKPKVSQASSSGLK. Polar residues-rich tracts occupy residues 207 to 219 and 265 to 281; these read GNQNSRRSGDSAN and KANSKPKVSQASSSGLK. A USP domain is found at 329-633; it reads FGLVNLGNSC…GAYMLLYARD (305 aa). Cys-338 functions as the Nucleophile in the catalytic mechanism. Residue His-592 is the Proton acceptor of the active site. The disordered stretch occupies residues 637 to 702; that stretch reads PVSKNGGRKS…TSSCSTKDSS (66 aa). Low complexity predominate over residues 677-701; it reads DWSSGSLSSMFSSSDTTSSCSTKDS.

Belongs to the peptidase C19 family.

It carries out the reaction Thiol-dependent hydrolysis of ester, thioester, amide, peptide and isopeptide bonds formed by the C-terminal Gly of ubiquitin (a 76-residue protein attached to proteins as an intracellular targeting signal).. In terms of biological role, recognizes and hydrolyzes the peptide bond at the C-terminal Gly of ubiquitin. Involved in the processing of poly-ubiquitin precursors as well as that of ubiquitinated proteins. The sequence is that of Ubiquitin carboxyl-terminal hydrolase 17 (UBP17) from Arabidopsis thaliana (Mouse-ear cress).